Reading from the N-terminus, the 101-residue chain is Large ribosomal subunit protein bL21 (101 aa).

Belongs to the bacterial ribosomal protein bL21 family. In terms of assembly, part of the 50S ribosomal subunit. Contacts protein L20.

Functionally, this protein binds to 23S rRNA in the presence of protein L20. The protein is Large ribosomal subunit protein bL21 of Corynebacterium efficiens (strain DSM 44549 / YS-314 / AJ 12310 / JCM 11189 / NBRC 100395).